The sequence spans 556 residues: Urocanate hydratase (556 aa).

NAD(+) contacts are provided by residues 52 to 53, Gln-130, 176 to 178, Glu-196, Arg-201, 242 to 243, 263 to 267, 273 to 274, and Tyr-322; these read GG, GMG, NA, QTSAH, and YL. The active site involves Cys-410. An NAD(+)-binding site is contributed by Gly-492.

The protein belongs to the urocanase family. NAD(+) is required as a cofactor.

It is found in the cytoplasm. It catalyses the reaction 4-imidazolone-5-propanoate = trans-urocanate + H2O. It participates in amino-acid degradation; L-histidine degradation into L-glutamate; N-formimidoyl-L-glutamate from L-histidine: step 2/3. In terms of biological role, catalyzes the conversion of urocanate to 4-imidazolone-5-propionate. The polypeptide is Urocanate hydratase (Bradyrhizobium sp. (strain BTAi1 / ATCC BAA-1182)).